The following is a 192-amino-acid chain: Adenylate kinase (192 aa).

Position 10-18 (10-18 (GVPGVGGTT)) interacts with ATP.

This sequence belongs to the archaeal adenylate kinase family. As to quaternary structure, monomer.

The protein localises to the cytoplasm. The enzyme catalyses AMP + ATP = 2 ADP. The sequence is that of Adenylate kinase from Methanococcus maripaludis (strain C7 / ATCC BAA-1331).